The following is a 564-amino-acid chain: Plant UBX domain-containing protein 8 (564 aa).

The residue at position 2 (alanine 2) is an N-acetylalanine. The UBA-like domain occupies alanine 2–glutamate 44. UIM domains lie at isoleucine 198 to serine 217 and glutamate 230 to glutamate 249. Positions serine 210–methionine 229 are disordered. Disordered stretches follow at residues alanine 267–aspartate 358, isoleucine 371–methionine 423, and phenylalanine 443–glutamate 483. A compositionally biased stretch (acidic residues) spans phenylalanine 291–glutamate 300. Phosphoserine is present on residues serine 295, serine 324, serine 326, and serine 328. A compositionally biased stretch (basic and acidic residues) spans aspartate 322–alanine 334. A compositionally biased stretch (pro residues) spans phenylalanine 381 to proline 395. Residues valine 412 to glutamate 478 adopt a coiled-coil conformation. Residues phenylalanine 443–leucine 475 are compositionally biased toward basic and acidic residues. The UBX domain occupies aspartate 482–phenylalanine 560.

Interacts with RABA5C/ARA-4.

This Arabidopsis thaliana (Mouse-ear cress) protein is Plant UBX domain-containing protein 8.